Here is a 344-residue protein sequence, read N- to C-terminus: Late embryogenesis abundant protein 17 (344 aa).

2 disordered regions span residues 1-20 and 116-258; these read MASR…RRAA and KDYT…QGQG. Residues 3–52 are a coiled coil; the sequence is SRQDRREARAEADARRAAEEIARARDERVMQAEVDARSAADEIARARADR. Composition is skewed to basic and acidic residues over residues 116-163, 172-230, and 238-252; these read KDYT…KDAV, EATK…DATK, and DKAR…DATD.

This sequence belongs to the LEA type 4 family. Expressed in embryos.

It is found in the nucleus. Involved in abiotic stress responses. May function as chaperone and contribute to prevent the formation of damaging protein aggregates. The protein is Late embryogenesis abundant protein 17 of Oryza sativa subsp. japonica (Rice).